The sequence spans 334 residues: Large ribosomal subunit protein uL3 (334 aa).

The segment covering 1–10 (MGMKKSRPRR) has biased composition (basic residues). The disordered stretch occupies residues 1–20 (MGMKKSRPRRGSLAFSPRKR).

Belongs to the universal ribosomal protein uL3 family. Part of the 50S ribosomal subunit. Forms a cluster with proteins L14 and L24e.

In terms of biological role, one of the primary rRNA binding proteins, it binds directly near the 3'-end of the 23S rRNA, where it nucleates assembly of the 50S subunit. The protein is Large ribosomal subunit protein uL3 of Methanococcus maripaludis (strain C7 / ATCC BAA-1331).